The following is a 320-amino-acid chain: ATP-dependent 6-phosphofructokinase (320 aa).

Glycine 11 is a binding site for ATP. Position 21-25 (21-25 (RAVVR)) interacts with ADP. ATP-binding positions include 72–73 (RC) and 102–105 (GDGS). Aspartate 103 is a binding site for Mg(2+). 125–127 (TID) contributes to the substrate binding site. Aspartate 127 functions as the Proton acceptor in the catalytic mechanism. Residue arginine 154 participates in ADP binding. Substrate-binding positions include arginine 162 and 169-171 (MGR). ADP-binding positions include 185–187 (GAE) and 214–216 (KTH). Residues glutamate 223, arginine 244, and 250-253 (HIQR) contribute to the substrate site.

Belongs to the phosphofructokinase type A (PFKA) family. ATP-dependent PFK group I subfamily. Prokaryotic clade 'B1' sub-subfamily. In terms of assembly, homotetramer. The cofactor is Mg(2+).

It is found in the cytoplasm. The enzyme catalyses beta-D-fructose 6-phosphate + ATP = beta-D-fructose 1,6-bisphosphate + ADP + H(+). Its pathway is carbohydrate degradation; glycolysis; D-glyceraldehyde 3-phosphate and glycerone phosphate from D-glucose: step 3/4. Allosterically activated by ADP and other diphosphonucleosides, and allosterically inhibited by phosphoenolpyruvate. In terms of biological role, catalyzes the phosphorylation of D-fructose 6-phosphate to fructose 1,6-bisphosphate by ATP, the first committing step of glycolysis. This chain is ATP-dependent 6-phosphofructokinase, found in Clostridium botulinum (strain Eklund 17B / Type B).